The chain runs to 389 residues: MGQNLSVTNPLGFFPEHQLDPLFRANTNNPDWDFNPNKDTWPEATKVGVGAFGPGFTPPHGGLLGWSPQAQGVTTILPAVPPPASTNRQSGRRPTPISPPLRDTHPQAMQWNSTVFHQALQDPRVRGLYFPAGGSSSGTVSPVPTTASPISSTFLKTGDPALNMESISSGFLGPLLVLQAGFFLLTKILTIPQSLDSWWTSLNFLGGAPVCPGQNSQSLTSNHSPTSCPPICPGYRWMCLRRFIIFLFILLLCLIFLLVLLDYRGMLPVCPLLPGTTTTSVGPCRTCTISAPGTSLFPSCCCTKPSDGNCTCIPIPPSWAFAKFLWGWASVRFSWLNLLVPFVQWFAGLSPTVWLSVIWMIWYWGPSLYNILSPFIPLLPIFFCLWAYI.

Residue Met-1 is modified to N-acetylmethionine. Gly-2 carries the N-myristoyl glycine; by host lipid modification. Residues 2 to 108 (GQNLSVTNPL…PPLRDTHPQA (107 aa)) form a pre-S1 region. The segment at 2–163 (GQNLSVTNPL…FLKTGDPALN (162 aa)) is pre-S. Over 2-170 (GQNLSVTNPL…ALNMESISSG (169 aa)) the chain is Virion surface; in external conformation. Residues 2–242 (GQNLSVTNPL…PGYRWMCLRR (241 aa)) are Intravirion; in internal conformation-facing. A disordered region spans residues 78–105 (PAVPPPASTNRQSGRRPTPISPPLRDTH). A pre-S2 region spans residues 109–163 (MQWNSTVFHQALQDPRVRGLYFPAGGSSSGTVSPVPTTASPISSTFLKTGDPALN). Residues 171-191 (FLGPLLVLQAGFFLLTKILTI) form a helical membrane-spanning segment. Residues 192-242 (PQSLDSWWTSLNFLGGAPVCPGQNSQSLTSNHSPTSCPPICPGYRWMCLRR) lie on the Intravirion; in external conformation side of the membrane. A helical transmembrane segment spans residues 243-263 (FIIFLFILLLCLIFLLVLLDY). Over 264 to 337 (RGMLPVCPLL…WASVRFSWLN (74 aa)) the chain is Virion surface. Asn-309 carries N-linked (GlcNAc...) asparagine; by host glycosylation. The chain crosses the membrane as a helical span at residues 338-358 (LLVPFVQWFAGLSPTVWLSVI). The Intravirion portion of the chain corresponds to 359 to 364 (WMIWYW). Residues 365-387 (GPSLYNILSPFIPLLPIFFCLWA) form a helical membrane-spanning segment. The Virion surface portion of the chain corresponds to 388–389 (YI).

The protein belongs to the orthohepadnavirus major surface antigen family. As to quaternary structure, in its internal form (Li-HBsAg), interacts with the capsid protein and with the isoform S. Interacts with host chaperone CANX. In terms of assembly, associates with host chaperone CANX through its pre-S2 N glycan; this association may be essential for isoform M proper secretion. Interacts with isoform L. Interacts with the antigens of satellite virus HDV (HDVAgs); this interaction is required for encapsidation of HDV genomic RNA. In terms of processing, isoform M is N-terminally acetylated by host at a ratio of 90%, and N-glycosylated by host at the pre-S2 region. Post-translationally, myristoylated.

The protein localises to the virion membrane. Its function is as follows. The large envelope protein exists in two topological conformations, one which is termed 'external' or Le-HBsAg and the other 'internal' or Li-HBsAg. In its external conformation the protein attaches the virus to cell receptors and thereby initiating infection. This interaction determines the species specificity and liver tropism. This attachment induces virion internalization predominantly through caveolin-mediated endocytosis. The large envelope protein also assures fusion between virion membrane and endosomal membrane. In its internal conformation the protein plays a role in virion morphogenesis and mediates the contact with the nucleocapsid like a matrix protein. The middle envelope protein plays an important role in the budding of the virion. It is involved in the induction of budding in a nucleocapsid independent way. In this process the majority of envelope proteins bud to form subviral lipoprotein particles of 22 nm of diameter that do not contain a nucleocapsid. The polypeptide is Large envelope protein (Pongo pygmaeus (Bornean orangutan)).